The chain runs to 249 residues: DNA repair protein RecO (249 aa).

The protein belongs to the RecO family.

In terms of biological role, involved in DNA repair and RecF pathway recombination. The chain is DNA repair protein RecO from Sinorhizobium medicae (strain WSM419) (Ensifer medicae).